The primary structure comprises 54 residues: Anti-adapter protein SpxO (54 aa).

As to quaternary structure, interacts with SpxH.

Inhibitor of Spx proteolytic control. Acts by interacting with SpxH/YjbH, which disrupts interaction between SpxH and Spx, and inhibits SpxH-enhanced proteolysis of Spx by ClpXP. Required for the stabilization of Spx and activation of Spx-regulated genes in response to cell wall stress. This is Anti-adapter protein SpxO from Bacillus subtilis (strain 168).